The primary structure comprises 1260 residues: Paraclostridial mosquitocidal protein 1 (1260 aa).

Residue His-208 coordinates Zn(2+). Catalysis depends on Glu-209, which acts as the Proton acceptor. Residues His-212 and Glu-248 each coordinate Zn(2+). Residues Cys-395 and Cys-406 are joined by a disulfide bond. The interval 401–824 (NRVNICIDVN…NIQSIPDFDI (424 aa)) is translocation domain (TD). Residues 825–1065 (NALIDRLGIQ…SYFNSNILRD (241 aa)) form an HCN region. Positions 1066–1260 (FWGEPLEYNK…FVSEDEGWKE (195 aa)) are HCC.

It belongs to the peptidase M27 family. Zn(2+) is required as a cofactor.

It catalyses the reaction Limited hydrolysis of proteins of the neuroexocytosis apparatus, synaptobrevins, SNAP25 or syntaxin. No detected action on small molecule substrates.. Its activity is regulated as follows. Preincubation with the metalloprotease inhibitor 1,10-phenanthroline before injection into Anopheles or Aedes decreases toxicity. In terms of biological role, neurotoxin active against Anopheles but not Aedes mosquitoes upon oral ingestion; expression of the ptox operon (ntnh-orfX1-orfX2-orfX3-pmp1) in B.thuringiensis kills Anopheles but not Aedes mosquito 3rd instar larvae. The ntnh-pmp1 construct is about half as toxic. PMP1 is toxic when injected directly into Anopheles or Aedes mosquito 3rd instar larvae, larvae no longer move, suggesting they are paralyzed. Adult mosquitoes (Anopheles or Aedes) and Drosophila lose the ability to fly in a dose-dependent manner by 24 hours after injection with 100 pg neurotoxin. Not toxic upon injection in mice. Neurotoxin that cleaves A.gambiae syntaxin 1a, probably hydrolyzing the '240-Glu-|-His-241' bond. Does not cleave A.gambiae n-synaptobrevin or SNAP-25, nor human syntaxin 1A. Functionally, responsible for host epithelial cell transcytosis, host nerve cell targeting and translocation of PMP1 light chain (LC) into host cytosol. Composed of 3 subdomains; the translocation domain (TD), and N-terminus and C-terminus of the receptor-binding domain (RBD), called HCN and HCC. This Paraclostridium bifermentans (Clostridium bifermentans) protein is Paraclostridial mosquitocidal protein 1.